Consider the following 263-residue polypeptide: Type III pantothenate kinase (263 aa).

6-13 serves as a coordination point for ATP; that stretch reads DVGNTNIK. 108–111 is a binding site for substrate; that stretch reads GSDR. Asp-110 (proton acceptor) is an active-site residue. Asp-131 is a binding site for K(+). Thr-134 contributes to the ATP binding site. A substrate-binding site is contributed by Thr-187.

Belongs to the type III pantothenate kinase family. In terms of assembly, homodimer. NH4(+) is required as a cofactor. K(+) serves as cofactor.

It localises to the cytoplasm. The enzyme catalyses (R)-pantothenate + ATP = (R)-4'-phosphopantothenate + ADP + H(+). Its pathway is cofactor biosynthesis; coenzyme A biosynthesis; CoA from (R)-pantothenate: step 1/5. Its function is as follows. Catalyzes the phosphorylation of pantothenate (Pan), the first step in CoA biosynthesis. This Anaplasma phagocytophilum (strain HZ) protein is Type III pantothenate kinase.